The primary structure comprises 76 residues: Conotoxin Ca11b (76 aa).

The first 19 residues, Met-1 to Gly-19, serve as a signal peptide directing secretion. The propeptide occupies Ala-20–Lys-42. 4 disulfide bridges follow: Cys-46–Cys-60, Cys-53–Cys-65, Cys-59–Cys-69, and Cys-64–Cys-76.

Expressed by the venom duct.

It is found in the secreted. In Conus caracteristicus (Characteristic cone), this protein is Conotoxin Ca11b.